Here is a 53-residue protein sequence, read N- to C-terminus: uncharacterized protein (53 aa).

This is an uncharacterized protein from Homo sapiens (Human).